The primary structure comprises 362 residues: Dihydroorotate dehydrogenase (quinone) (362 aa).

FMN is bound by residues 62–66 (AGYDK) and threonine 86. Lysine 66 contributes to the substrate binding site. 111–115 (NRLGF) serves as a coordination point for substrate. FMN-binding residues include asparagine 139 and asparagine 170. A substrate-binding site is contributed by asparagine 170. Serine 173 serves as the catalytic Nucleophile. Asparagine 175 is a binding site for substrate. 2 residues coordinate FMN: lysine 215 and serine 243. 244–245 (NT) contributes to the substrate binding site. Residues glycine 266, glycine 295, and 316 to 317 (YS) each bind FMN.

It belongs to the dihydroorotate dehydrogenase family. Type 2 subfamily. Monomer. It depends on FMN as a cofactor.

Its subcellular location is the cell membrane. It catalyses the reaction (S)-dihydroorotate + a quinone = orotate + a quinol. It participates in pyrimidine metabolism; UMP biosynthesis via de novo pathway; orotate from (S)-dihydroorotate (quinone route): step 1/1. In terms of biological role, catalyzes the conversion of dihydroorotate to orotate with quinone as electron acceptor. In Rhizobium meliloti (strain 1021) (Ensifer meliloti), this protein is Dihydroorotate dehydrogenase (quinone).